Consider the following 189-residue polypeptide: MRVPKKERQRLLQETIEHNPFIKDEELSKQFSVSIQTIRLDRMELKIPEVRERIKHVASEHLDEVKSLSMSEVIGDMIDLKLDDSAISVLDIEKEHVFSRNEIARGHVLFAQANSLAVALINDELALTTKADIRFSRQVHLGERVVAKARVMKLRGDGRTDVTVESYVGEECVFDGDFTIYRRGEEEQA.

The protein belongs to the FapR family.

Transcriptional factor involved in regulation of membrane lipid biosynthesis by repressing genes involved in fatty acid and phospholipid metabolism. This chain is Transcription factor FapR, found in Exiguobacterium sp. (strain ATCC BAA-1283 / AT1b).